A 443-amino-acid polypeptide reads, in one-letter code: Adenylosuccinate synthetase (443 aa).

GTP-binding positions include 12 to 18 and 40 to 42; these read GDEGKGK and GHT. D13 (proton acceptor) is an active-site residue. Residues D13 and G40 each coordinate Mg(2+). Residues 13–16, 38–41, T128, R142, Q223, T238, and R302 each bind IMP; these read DEGK and NAGH. Catalysis depends on H41, which acts as the Proton donor. 298 to 304 contacts substrate; sequence TTTGRRR. Residues R304, 330-332, and 412-414 contribute to the GTP site; these read KLD and SLG.

Belongs to the adenylosuccinate synthetase family. In terms of assembly, homodimer. It depends on Mg(2+) as a cofactor.

The protein localises to the cytoplasm. The catalysed reaction is IMP + L-aspartate + GTP = N(6)-(1,2-dicarboxyethyl)-AMP + GDP + phosphate + 2 H(+). It functions in the pathway purine metabolism; AMP biosynthesis via de novo pathway; AMP from IMP: step 1/2. Plays an important role in the de novo pathway of purine nucleotide biosynthesis. Catalyzes the first committed step in the biosynthesis of AMP from IMP. The polypeptide is Adenylosuccinate synthetase (Picosynechococcus sp. (strain ATCC 27264 / PCC 7002 / PR-6) (Agmenellum quadruplicatum)).